The chain runs to 172 residues: Shikimate kinase (172 aa).

Residue 11 to 16 participates in ATP binding; that stretch reads GCGKST. Ser15 contributes to the Mg(2+) binding site. Residues Asp33, Arg57, and Gly80 each contribute to the substrate site. An ATP-binding site is contributed by Arg120. Arg142 serves as a coordination point for substrate. Arg158 serves as a coordination point for ATP.

The protein belongs to the shikimate kinase family. In terms of assembly, monomer. Mg(2+) serves as cofactor.

It is found in the cytoplasm. The enzyme catalyses shikimate + ATP = 3-phosphoshikimate + ADP + H(+). It functions in the pathway metabolic intermediate biosynthesis; chorismate biosynthesis; chorismate from D-erythrose 4-phosphate and phosphoenolpyruvate: step 5/7. Its function is as follows. Catalyzes the specific phosphorylation of the 3-hydroxyl group of shikimic acid using ATP as a cosubstrate. The chain is Shikimate kinase from Flavobacterium johnsoniae (strain ATCC 17061 / DSM 2064 / JCM 8514 / BCRC 14874 / CCUG 350202 / NBRC 14942 / NCIMB 11054 / UW101) (Cytophaga johnsonae).